The following is a 493-amino-acid chain: Phenmedipham hydrolase (493 aa).

S188 serves as the catalytic Acyl-ester intermediate. Residues E307 and H402 each act as charge relay system in the active site.

The protein belongs to the type-B carboxylesterase/lipase family. As to quaternary structure, monomer.

Functionally, may degrade the phenylcarbamate herbicides phenmedipham and desmedipham cometabolically by hydrolyzing their central carbamate linkages. Conveys resistance to the herbicide phenmedipham. The chain is Phenmedipham hydrolase (pcd) from Pseudarthrobacter oxydans (Arthrobacter oxydans).